The following is a 672-amino-acid chain: Zinc finger protein 271 (672 aa).

The interval 1 to 29 (MEIQFNYESQEHHLLSDGENKTKIGKPAS) is disordered. Residues 9–22 (SQEHHLLSDGENKT) show a composition bias toward basic and acidic residues. The C2H2-type 1; degenerate zinc finger occupies 80-102 (HNCDEYGQSFVWNTGLFRHRKTH). C2H2-type zinc fingers lie at residues 107–129 (YECD…QRIH), 135–157 (YSCN…QRVH), 163–185 (YKCD…QRIH), 191–213 (YQCS…QRIH), 219–241 (YTCN…QRIH), 247–269 (YKCD…QRIH), 275–297 (YPCN…RRIH), 303–325 (YKCN…QRIH), 331–353 (YPCD…QRIH), 359–381 (YPCN…HRIH), 387–409 (YECD…QRIH), 415–437 (YPCS…QRIH), 443–465 (YACN…QRVH), 471–493 (YHCN…QRIH), 499–521 (YLCT…QRIH), 527–549 (YKCS…QRIH), 555–577 (NPCN…QKIH), 583–605 (YKCD…QKIH), and 611–633 (YRCV…EEVH).

It belongs to the krueppel C2H2-type zinc-finger protein family.

The protein localises to the nucleus. Its function is as follows. May be involved in transcriptional regulation. The polypeptide is Zinc finger protein 271 (ZNF271) (Pongo abelii (Sumatran orangutan)).